A 476-amino-acid polypeptide reads, in one-letter code: ATP synthase subunit beta, chloroplastic (476 aa).

ATP is bound at residue 155 to 162 (GGAGVGKT).

The protein belongs to the ATPase alpha/beta chains family. F-type ATPases have 2 components, CF(1) - the catalytic core - and CF(0) - the membrane proton channel. CF(1) has five subunits: alpha(3), beta(3), gamma(1), delta(1), epsilon(1). CF(0) has four main subunits: a(1), b(1), b'(1) and c(9-12).

The protein localises to the plastid. Its subcellular location is the chloroplast thylakoid membrane. It catalyses the reaction ATP + H2O + 4 H(+)(in) = ADP + phosphate + 5 H(+)(out). Produces ATP from ADP in the presence of a proton gradient across the membrane. The catalytic sites are hosted primarily by the beta subunits. The protein is ATP synthase subunit beta, chloroplastic of Emiliania huxleyi (Coccolithophore).